A 220-amino-acid chain; its full sequence is Uracil-DNA glycosylase (220 aa).

The Proton acceptor role is filled by Asp60.

This sequence belongs to the uracil-DNA glycosylase (UDG) superfamily. UNG family.

Its subcellular location is the cytoplasm. It carries out the reaction Hydrolyzes single-stranded DNA or mismatched double-stranded DNA and polynucleotides, releasing free uracil.. In terms of biological role, excises uracil residues from the DNA which can arise as a result of misincorporation of dUMP residues by DNA polymerase or due to deamination of cytosine. This Francisella tularensis subsp. novicida (strain U112) protein is Uracil-DNA glycosylase.